The following is a 382-amino-acid chain: Na(+)/H(+) antiporter NhaA 2 (382 aa).

A run of 11 helical transmembrane segments spans residues 7 to 27 (MVLS…LALL), 58 to 78 (LDLW…GLEL), 94 to 114 (SLPI…FIAI), 124 to 144 (GWAI…MLLG), 153 to 173 (LFLL…IALF), 178 to 198 (LSAL…LLNY), 199 to 219 (YHIT…IAML), 255 to 275 (NPWV…GIDI), 291 to 311 (IILG…FIAI), 327 to 347 (FYGI…IDGL), and 361 to 381 (LAIL…LKIV).

This sequence belongs to the NhaA Na(+)/H(+) (TC 2.A.33) antiporter family.

It is found in the cell inner membrane. It carries out the reaction Na(+)(in) + 2 H(+)(out) = Na(+)(out) + 2 H(+)(in). Functionally, na(+)/H(+) antiporter that extrudes sodium in exchange for external protons. The sequence is that of Na(+)/H(+) antiporter NhaA 2 from Campylobacter jejuni (strain RM1221).